Here is a 152-residue protein sequence, read N- to C-terminus: Pseudo histidine-containing phosphotransfer protein 5 (152 aa).

Residues N38–A140 form the HPt domain.

Functionally, functions as a two-component phosphorelay mediator between cytokinin sensor histidine kinases and response regulators (B-type ARRs). Plays an important role in propagating cytokinin signal transduction. This Oryza sativa subsp. japonica (Rice) protein is Pseudo histidine-containing phosphotransfer protein 5.